Reading from the N-terminus, the 287-residue chain is Uroplakin-3a (287 aa).

Positions M1–G18 are cleaved as a signal peptide. The Lumenal segment spans residues V19–G207. N-linked (GlcNAc...) asparagine glycans are attached at residues N74, N139, and N170. Residues M208–V235 traverse the membrane as a helical segment. Residues D236–D287 are Cytoplasmic-facing. The interval A243–S274 is disordered. A compositionally biased stretch (polar residues) spans L259 to R271.

This sequence belongs to the uroplakin-3 family. In terms of assembly, heterodimer with uroplakin-1B (UPK1B). Bladder epithelium.

The protein localises to the endoplasmic reticulum membrane. In terms of biological role, component of the asymmetric unit membrane (AUM); a highly specialized biomembrane elaborated by terminally differentiated urothelial cells. May play an important role in AUM-cytoskeleton interaction in terminally differentiated urothelial cells. It also contributes to the formation of urothelial glycocalyx which may play an important role in preventing bacterial adherence. This chain is Uroplakin-3a (UPK3A), found in Bos taurus (Bovine).